We begin with the raw amino-acid sequence, 839 residues long: DNA gyrase subunit A (839 aa).

A Topo IIA-type catalytic domain is found at leucine 46 to leucine 510. The active-site O-(5'-phospho-DNA)-tyrosine intermediate is the tyrosine 134. Positions glutamine 537–glycine 543 match the GyrA-box motif.

Belongs to the type II topoisomerase GyrA/ParC subunit family. In terms of assembly, heterotetramer, composed of two GyrA and two GyrB chains. In the heterotetramer, GyrA contains the active site tyrosine that forms a transient covalent intermediate with DNA, while GyrB binds cofactors and catalyzes ATP hydrolysis.

It is found in the cytoplasm. The enzyme catalyses ATP-dependent breakage, passage and rejoining of double-stranded DNA.. Functionally, a type II topoisomerase that negatively supercoils closed circular double-stranded (ds) DNA in an ATP-dependent manner to modulate DNA topology and maintain chromosomes in an underwound state. Negative supercoiling favors strand separation, and DNA replication, transcription, recombination and repair, all of which involve strand separation. Also able to catalyze the interconversion of other topological isomers of dsDNA rings, including catenanes and knotted rings. Type II topoisomerases break and join 2 DNA strands simultaneously in an ATP-dependent manner. The polypeptide is DNA gyrase subunit A (Mycoplasma pneumoniae (strain ATCC 29342 / M129 / Subtype 1) (Mycoplasmoides pneumoniae)).